Here is a 567-residue protein sequence, read N- to C-terminus: Protein NRT1/ PTR FAMILY 4.5 (567 aa).

Helical transmembrane passes span 30–50, 70–92, 99–118, 147–167, 189–209, 219–239, 326–346, 374–394, 411–431, 448–468, 491–511, and 535–555; these read GMLA…AFLA, SSSE…GFLA, FVIF…LLTI, AFLF…KGSL, FFNY…TFVV, WGFG…LLGS, IVLK…CLAQ, VFPV…IIPF, IGVG…VELK, LPIT…ADLF, SLSW…VPIV, and LFYW…LFWA.

This sequence belongs to the major facilitator superfamily. Proton-dependent oligopeptide transporter (POT/PTR) (TC 2.A.17) family. As to expression, expressed in flowers and siliques.

It is found in the membrane. Its function is as follows. Involved in abscisic acid transport. This is Protein NRT1/ PTR FAMILY 4.5 (NPF4.5) from Arabidopsis thaliana (Mouse-ear cress).